A 227-amino-acid chain; its full sequence is MHIEKLDFENSPYLGVFGIATDKVVLIREGLQEKKLEVIREVLKVPVVEASLMKSRIIGVLGAGNSNAIIVPWYVWDSELEKIKNAFREYGIDTEVVPFQTKYTALGNLILTNDKGALVSSKFSREEAKKIGDILGVEVERGVIAGIVAVGSAGVVTNKGGLVHPEATDEELEWLSDLFKVDVYVGTANMGVPYVGSCMLANSYGVVVGHLTTGPEIVKIEEALGFI.

This sequence belongs to the eIF-6 family.

In terms of biological role, binds to the 50S ribosomal subunit and prevents its association with the 30S ribosomal subunit to form the 70S initiation complex. This Pyrococcus furiosus (strain ATCC 43587 / DSM 3638 / JCM 8422 / Vc1) protein is Translation initiation factor 6.